Reading from the N-terminus, the 214-residue chain is Small ribosomal subunit protein uS3 (214 aa).

Residues 39-107 form the KH type-2 domain; sequence IRAYLLKKPA…EVWVAVEEVK (69 aa).

This sequence belongs to the universal ribosomal protein uS3 family. As to quaternary structure, part of the 30S ribosomal subunit. Forms a tight complex with proteins S10 and S14.

Its function is as follows. Binds the lower part of the 30S subunit head. Binds mRNA in the 70S ribosome, positioning it for translation. This Protochlamydia amoebophila (strain UWE25) protein is Small ribosomal subunit protein uS3.